Reading from the N-terminus, the 161-residue chain is Arginine repressor (161 aa).

The protein belongs to the ArgR family.

It is found in the cytoplasm. It functions in the pathway amino-acid biosynthesis; L-arginine biosynthesis [regulation]. Regulates arginine biosynthesis genes. This is Arginine repressor from Corynebacterium aurimucosum (strain ATCC 700975 / DSM 44827 / CIP 107346 / CN-1) (Corynebacterium nigricans).